The following is a 230-amino-acid chain: Endonuclease NucS (230 aa).

This sequence belongs to the NucS endonuclease family.

The protein localises to the cytoplasm. Its function is as follows. Cleaves both 3' and 5' ssDNA extremities of branched DNA structures. The polypeptide is Endonuclease NucS (Corynebacterium aurimucosum (strain ATCC 700975 / DSM 44827 / CIP 107346 / CN-1) (Corynebacterium nigricans)).